The primary structure comprises 804 residues: Elongation factor G, mitochondrial (804 aa).

The transit peptide at 1-9 (MVRPAQVRA) directs the protein to the mitochondrion. The 287-residue stretch at 103 to 389 (SKVRNIGIAA…GVCDYLPNPS (287 aa)) folds into the tr-type G domain. GTP contacts are provided by residues 112–119 (AHIDSGKT), 187–191 (DTPGH), and 241–244 (NKMD).

It belongs to the TRAFAC class translation factor GTPase superfamily. Classic translation factor GTPase family. EF-G/EF-2 subfamily.

The protein localises to the mitochondrion. Its pathway is protein biosynthesis; polypeptide chain elongation. In terms of biological role, mitochondrial GTPase that catalyzes the GTP-dependent ribosomal translocation step during translation elongation. During this step, the ribosome changes from the pre-translocational (PRE) to the post-translocational (POST) state as the newly formed A-site-bound peptidyl-tRNA and P-site-bound deacylated tRNA move to the P and E sites, respectively. Catalyzes the coordinated movement of the two tRNA molecules, the mRNA and conformational changes in the ribosome. In Talaromyces stipitatus (strain ATCC 10500 / CBS 375.48 / QM 6759 / NRRL 1006) (Penicillium stipitatum), this protein is Elongation factor G, mitochondrial (mef1).